Reading from the N-terminus, the 820-residue chain is Leucine--tRNA ligase (820 aa).

A 'HIGH' region motif is present at residues 42 to 52 (PYPSGDLHMGH). The 'KMSKS' region motif lies at 576–580 (KMSKS). Lys579 is an ATP binding site.

Belongs to the class-I aminoacyl-tRNA synthetase family.

Its subcellular location is the cytoplasm. It catalyses the reaction tRNA(Leu) + L-leucine + ATP = L-leucyl-tRNA(Leu) + AMP + diphosphate. The sequence is that of Leucine--tRNA ligase from Coxiella burnetii (strain CbuK_Q154) (Coxiella burnetii (strain Q154)).